The sequence spans 600 residues: NADH-quinone oxidoreductase subunit C/D (600 aa).

The NADH dehydrogenase I subunit C stretch occupies residues 1 to 190 (MVNNMTDLTA…DPFELTKAKQ (190 aa)). The interval 214-600 (DFMFLNLGPN…IDFVMSDVDR (387 aa)) is NADH dehydrogenase I subunit D.

In the N-terminal section; belongs to the complex I 30 kDa subunit family. It in the C-terminal section; belongs to the complex I 49 kDa subunit family. As to quaternary structure, NDH-1 is composed of 13 different subunits. Subunits NuoB, CD, E, F, and G constitute the peripheral sector of the complex.

The protein resides in the cell inner membrane. The catalysed reaction is a quinone + NADH + 5 H(+)(in) = a quinol + NAD(+) + 4 H(+)(out). Its function is as follows. NDH-1 shuttles electrons from NADH, via FMN and iron-sulfur (Fe-S) centers, to quinones in the respiratory chain. The immediate electron acceptor for the enzyme in this species is believed to be ubiquinone. Couples the redox reaction to proton translocation (for every two electrons transferred, four hydrogen ions are translocated across the cytoplasmic membrane), and thus conserves the redox energy in a proton gradient. The chain is NADH-quinone oxidoreductase subunit C/D from Salmonella paratyphi C (strain RKS4594).